A 145-amino-acid polypeptide reads, in one-letter code: D-aminoacyl-tRNA deacylase (145 aa).

The Gly-cisPro motif, important for rejection of L-amino acids signature appears at Gly-137–Pro-138.

It belongs to the DTD family. As to quaternary structure, homodimer.

Its subcellular location is the cytoplasm. The enzyme catalyses glycyl-tRNA(Ala) + H2O = tRNA(Ala) + glycine + H(+). It catalyses the reaction a D-aminoacyl-tRNA + H2O = a tRNA + a D-alpha-amino acid + H(+). In terms of biological role, an aminoacyl-tRNA editing enzyme that deacylates mischarged D-aminoacyl-tRNAs. Also deacylates mischarged glycyl-tRNA(Ala), protecting cells against glycine mischarging by AlaRS. Acts via tRNA-based rather than protein-based catalysis; rejects L-amino acids rather than detecting D-amino acids in the active site. By recycling D-aminoacyl-tRNA to D-amino acids and free tRNA molecules, this enzyme counteracts the toxicity associated with the formation of D-aminoacyl-tRNA entities in vivo and helps enforce protein L-homochirality. This chain is D-aminoacyl-tRNA deacylase, found in Francisella tularensis subsp. novicida (strain U112).